The chain runs to 123 residues: Large ribosomal subunit protein bL12 (123 aa).

It belongs to the bacterial ribosomal protein bL12 family. As to quaternary structure, homodimer. Part of the ribosomal stalk of the 50S ribosomal subunit. Forms a multimeric L10(L12)X complex, where L10 forms an elongated spine to which 2 to 4 L12 dimers bind in a sequential fashion. Binds GTP-bound translation factors.

Functionally, forms part of the ribosomal stalk which helps the ribosome interact with GTP-bound translation factors. Is thus essential for accurate translation. In Clostridium kluyveri (strain NBRC 12016), this protein is Large ribosomal subunit protein bL12.